The following is a 313-amino-acid chain: Porphobilinogen deaminase (313 aa).

An S-(dipyrrolylmethanemethyl)cysteine modification is found at cysteine 242.

Belongs to the HMBS family. Monomer. It depends on dipyrromethane as a cofactor.

It catalyses the reaction 4 porphobilinogen + H2O = hydroxymethylbilane + 4 NH4(+). Its pathway is porphyrin-containing compound metabolism; protoporphyrin-IX biosynthesis; coproporphyrinogen-III from 5-aminolevulinate: step 2/4. Tetrapolymerization of the monopyrrole PBG into the hydroxymethylbilane pre-uroporphyrinogen in several discrete steps. This is Porphobilinogen deaminase from Yersinia pseudotuberculosis serotype O:3 (strain YPIII).